The sequence spans 366 residues: Molybdopterin synthase catalytic subunit (366 aa).

Substrate contacts are provided by residues 101–102, Lys117, and 124–126; these read HR and KKE.

It belongs to the MoaE family. MOCS2B subfamily. Heterotetramer; composed of 2 small (Mocs2A) and 2 large (Mocs2B) subunits.

The protein resides in the cytoplasm. The catalysed reaction is 2 [molybdopterin-synthase sulfur-carrier protein]-C-terminal-Gly-aminoethanethioate + cyclic pyranopterin phosphate + H2O = molybdopterin + 2 [molybdopterin-synthase sulfur-carrier protein]-C-terminal Gly-Gly + 2 H(+). The protein operates within cofactor biosynthesis; molybdopterin biosynthesis. Its function is as follows. Catalytic subunit of the molybdopterin synthase complex, a complex that catalyzes the conversion of precursor Z into molybdopterin. Acts by mediating the incorporation of 2 sulfur atoms from thiocarboxylated Mocs2A into precursor Z to generate a dithiolene group. The chain is Molybdopterin synthase catalytic subunit from Drosophila mojavensis (Fruit fly).